Consider the following 469-residue polypeptide: Tubulin gamma chain (469 aa).

142-148 contributes to the GTP binding site; sequence AGGTGSG.

Belongs to the tubulin family.

Its subcellular location is the cytoplasm. The protein resides in the cytoskeleton. The protein localises to the microtubule organizing center. It localises to the spindle pole body. Tubulin is the major constituent of microtubules. The gamma chain is found at microtubule organizing centers (MTOC) such as the spindle poles or the centrosome, suggesting that it is involved in the minus-end nucleation of microtubule assembly. This chain is Tubulin gamma chain (TUB4), found in Microbotryum violaceum (Anther smut fungus).